We begin with the raw amino-acid sequence, 399 residues long: Succinate--CoA ligase [ADP-forming] subunit beta (399 aa).

In terms of domain architecture, ATP-grasp spans 9 to 254 (KAVLAEFGAP…ESEEDPKEIE (246 aa)). ATP is bound by residues K46, 53–55 (GRG), E109, A112, and E117. Residues N209 and D223 each coordinate Mg(2+). Residues N274 and 331 to 333 (GIM) each bind substrate.

This sequence belongs to the succinate/malate CoA ligase beta subunit family. In terms of assembly, heterotetramer of two alpha and two beta subunits. Requires Mg(2+) as cofactor.

The enzyme catalyses succinate + ATP + CoA = succinyl-CoA + ADP + phosphate. It catalyses the reaction GTP + succinate + CoA = succinyl-CoA + GDP + phosphate. It functions in the pathway carbohydrate metabolism; tricarboxylic acid cycle; succinate from succinyl-CoA (ligase route): step 1/1. In terms of biological role, succinyl-CoA synthetase functions in the citric acid cycle (TCA), coupling the hydrolysis of succinyl-CoA to the synthesis of either ATP or GTP and thus represents the only step of substrate-level phosphorylation in the TCA. The beta subunit provides nucleotide specificity of the enzyme and binds the substrate succinate, while the binding sites for coenzyme A and phosphate are found in the alpha subunit. This chain is Succinate--CoA ligase [ADP-forming] subunit beta, found in Caulobacter vibrioides (strain NA1000 / CB15N) (Caulobacter crescentus).